Consider the following 654-residue polypeptide: Threonine--tRNA ligase (654 aa).

A TGS domain is found at 1–63 (MASINVKFPD…TTDGSIEIIA (63 aa)). Residues 248–546 (DHRVIGNELD…LTEIYKGAFP (299 aa)) form a catalytic region. Positions 342, 393, and 523 each coordinate Zn(2+).

Belongs to the class-II aminoacyl-tRNA synthetase family. As to quaternary structure, homodimer. The cofactor is Zn(2+).

The protein localises to the cytoplasm. It catalyses the reaction tRNA(Thr) + L-threonine + ATP = L-threonyl-tRNA(Thr) + AMP + diphosphate + H(+). Catalyzes the attachment of threonine to tRNA(Thr) in a two-step reaction: L-threonine is first activated by ATP to form Thr-AMP and then transferred to the acceptor end of tRNA(Thr). Also edits incorrectly charged L-seryl-tRNA(Thr). The polypeptide is Threonine--tRNA ligase (Lactiplantibacillus plantarum (strain ATCC BAA-793 / NCIMB 8826 / WCFS1) (Lactobacillus plantarum)).